Consider the following 459-residue polypeptide: Inositol-trisphosphate 3-kinase A (459 aa).

The disordered stretch occupies residues 1–29 (MTLPGRPTGMARPRGAGPCSPGLERAPRR). Omega-N-methylarginine is present on residues Arg-35, Arg-55, and Arg-62. Residues 49-164 (AAAGEPRARG…TSEDVGQKSH (116 aa)) are disordered. Residues 116–132 (RRLSTSSLSSTGSSSLL) are compositionally biased toward low complexity. 2 positions are modified to phosphoserine: Ser-135 and Ser-195. ATP-binding positions include Ser-195, Lys-207, 247-249 (QDL), and Asp-260. Substrate-binding residues include Lys-262 and Arg-283. The calmodulin-binding stretch occupies residues 285-293 (DMYKKMLAV). Position 310–317 (310–317 (KPRYMQWR)) interacts with substrate. ATP-binding residues include Lys-334 and Asp-414. Lys-417 is a binding site for substrate.

It belongs to the inositol phosphokinase (IPK) family.

It localises to the cytoplasm. It is found in the cytoskeleton. It catalyses the reaction 1D-myo-inositol 1,4,5-trisphosphate + ATP = 1D-myo-inositol 1,3,4,5-tetrakisphosphate + ADP + H(+). With respect to regulation, activated by calcium/calmodulin. Functionally, catalyzes the phosphorylation of 1D-myo-inositol 1,4,5-trisphosphate (InsP3) into 1D-myo-inositol 1,3,4,5-tetrakisphosphate and participates to the regulation of calcium homeostasis. The polypeptide is Inositol-trisphosphate 3-kinase A (Mus musculus (Mouse)).